Here is a 279-residue protein sequence, read N- to C-terminus: Energy-coupling factor transporter ATP-binding protein EcfA1 (279 aa).

The region spanning 6-240 is the ABC transporter domain; it reads VEFRNVSFRY…KDALREIGLD (235 aa). 40–47 is a binding site for ATP; it reads GHNGSGKS.

This sequence belongs to the ABC transporter superfamily. Energy-coupling factor EcfA family. Forms a stable energy-coupling factor (ECF) transporter complex composed of 2 membrane-embedded substrate-binding proteins (S component), 2 ATP-binding proteins (A component) and 2 transmembrane proteins (T component).

It is found in the cell membrane. In terms of biological role, ATP-binding (A) component of a common energy-coupling factor (ECF) ABC-transporter complex. Unlike classic ABC transporters this ECF transporter provides the energy necessary to transport a number of different substrates. This Oceanobacillus iheyensis (strain DSM 14371 / CIP 107618 / JCM 11309 / KCTC 3954 / HTE831) protein is Energy-coupling factor transporter ATP-binding protein EcfA1.